Consider the following 73-residue polypeptide: Large ribosomal subunit protein bL31 (73 aa).

Belongs to the bacterial ribosomal protein bL31 family. Type A subfamily. As to quaternary structure, part of the 50S ribosomal subunit.

Functionally, binds the 23S rRNA. The chain is Large ribosomal subunit protein bL31 from Cereibacter sphaeroides (strain ATCC 17029 / ATH 2.4.9) (Rhodobacter sphaeroides).